Reading from the N-terminus, the 457-residue chain is Allantoinase (457 aa).

Positions 58, 60, 145, 181, 237, and 310 each coordinate Zn(2+). N6-carboxylysine is present on lysine 145.

Belongs to the metallo-dependent hydrolases superfamily. Allantoinase family. As to quaternary structure, homotetramer. Zn(2+) is required as a cofactor. Post-translationally, carboxylation allows a single lysine to coordinate two zinc ions.

The enzyme catalyses (S)-allantoin + H2O = allantoate + H(+). It participates in nitrogen metabolism; (S)-allantoin degradation; allantoate from (S)-allantoin: step 1/1. Functionally, catalyzes the conversion of allantoin (5-ureidohydantoin) to allantoic acid by hydrolytic cleavage of the five-member hydantoin ring. The protein is Allantoinase of Solibacter usitatus (strain Ellin6076).